The primary structure comprises 318 residues: tRNA-modifying protein YgfZ (318 aa).

Folate-binding residues include Trp24 and Trp185.

Belongs to the tRNA-modifying YgfZ family.

Its subcellular location is the cytoplasm. Functionally, folate-binding protein involved in regulating the level of ATP-DnaA and in the modification of some tRNAs. It is probably a key factor in regulatory networks that act via tRNA modification, such as initiation of chromosomal replication. The sequence is that of tRNA-modifying protein YgfZ from Buchnera aphidicola subsp. Baizongia pistaciae (strain Bp).